Here is a 156-residue protein sequence, read N- to C-terminus: Nuclear cap-binding protein subunit 2 (156 aa).

Ser2 is modified (N-acetylserine). A phosphoserine mark is found at Ser13 and Ser18. MRNA-binding positions include Tyr20, Tyr43, 112–116 (RTDWD), 123–127 (RQYGR), and 133–134 (QV). Residues 40–118 (CTLYVGNLSF…RIIRTDWDAG (79 aa)) enclose the RRM domain. The segment at 124-156 (QYGRGRSGGQVRDEYREDYDAGRGGYGKLAQKQ) is disordered. The span at 134-144 (VRDEYREDYDA) shows a compositional bias: basic and acidic residues. Arg146 carries the post-translational modification Omega-N-methylarginine.

Belongs to the RRM NCBP2 family. Component of the nuclear cap-binding complex (CBC), a heterodimer composed of NCBP1/CBP80 and NCBP2/CBP20 that interacts with m7GpppG-capped RNA. Found in a U snRNA export complex with PHAX/RNUXA, NCBP1/CBP80, NCBP2/CBP20, RAN, XPO1 and m7G-capped RNA. Interacts with PHAX/RNUXA, EIF4G1, HNRNPF, HNRNPH1 and ALYREF/THOC4/ALY. Interacts with SRRT/ARS2 and KPNA3.

The protein localises to the nucleus. Its subcellular location is the cytoplasm. Its function is as follows. Component of the cap-binding complex (CBC), which binds co-transcriptionally to the 5' cap of pre-mRNAs and is involved in various processes such as pre-mRNA splicing, translation regulation, nonsense-mediated mRNA decay, RNA-mediated gene silencing (RNAi) by microRNAs (miRNAs) and mRNA export. The CBC complex is involved in mRNA export from the nucleus via its interaction with ALYREF/THOC4/ALY, leading to the recruitment of the mRNA export machinery to the 5' end of mRNA and to mRNA export in a 5' to 3' direction through the nuclear pore. The CBC complex is also involved in mediating U snRNA and intronless mRNAs export from the nucleus. The CBC complex is essential for a pioneer round of mRNA translation, before steady state translation when the CBC complex is replaced by cytoplasmic cap-binding protein eIF4E. The pioneer round of mRNA translation mediated by the CBC complex plays a central role in nonsense-mediated mRNA decay (NMD), NMD only taking place in mRNAs bound to the CBC complex, but not on eIF4E-bound mRNAs. The CBC complex enhances NMD in mRNAs containing at least one exon-junction complex (EJC) via its interaction with UPF1, promoting the interaction between UPF1 and UPF2. The CBC complex is also involved in 'failsafe' NMD, which is independent of the EJC complex, while it does not participate in Staufen-mediated mRNA decay (SMD). During cell proliferation, the CBC complex is also involved in microRNAs (miRNAs) biogenesis via its interaction with SRRT/ARS2, thereby being required for miRNA-mediated RNA interference. The CBC complex also acts as a negative regulator of PARN, thereby acting as an inhibitor of mRNA deadenylation. In the CBC complex, NCBP2/CBP20 recognizes and binds capped RNAs (m7GpppG-capped RNA) but requires NCBP1/CBP80 to stabilize the movement of its N-terminal loop and lock the CBC into a high affinity cap-binding state with the cap structure. The conventional cap-binding complex with NCBP2 binds both small nuclear RNA (snRNA) and messenger (mRNA) and is involved in their export from the nucleus. This is Nuclear cap-binding protein subunit 2 (Ncbp2) from Mus musculus (Mouse).